A 365-amino-acid polypeptide reads, in one-letter code: 2-aminoethylphosphonate--pyruvate transaminase (365 aa).

An N6-(pyridoxal phosphate)lysine modification is found at Lys194.

It belongs to the class-V pyridoxal-phosphate-dependent aminotransferase family. PhnW subfamily. In terms of assembly, homodimer. Pyridoxal 5'-phosphate is required as a cofactor.

It catalyses the reaction (2-aminoethyl)phosphonate + pyruvate = phosphonoacetaldehyde + L-alanine. Functionally, involved in phosphonate degradation. The protein is 2-aminoethylphosphonate--pyruvate transaminase of Bacillus cereus (strain ATCC 10987 / NRS 248).